The primary structure comprises 303 residues: Aquaporin-7 (303 aa).

Residues 1–21 (MAPRSVLETIQSVLQKNMVRE) are Cytoplasmic-facing. At Ser-5 the chain carries Phosphoserine. A helical transmembrane segment spans residues 22–39 (FLAEFLSTYVMMVFGLGS). Over 40 to 52 (VAHMVLGENSGSY) the chain is Extracellular. Residues 53-70 (LGVNLGFGFGVTMGVHVA) traverse the membrane as a helical segment. The Cytoplasmic portion of the chain corresponds to 71–74 (GGIS). Residues 75-88 (GAHMNAAVTFTNCA) constitute an intramembrane region (discontinuously helical). An NPA 1 motif is present at residues 79 to 81 (NAA). Residues 89–96 (LGRMTWKK) lie on the Cytoplasmic side of the membrane. Residues 97 to 117 (FPVYVLGQFLGSFSAAATTYL) form a helical membrane-spanning segment. Topologically, residues 118 to 152 (IFYGAINHFAGGDLLVTGSKATANIFATYLPEYMT) are extracellular. A helical transmembrane segment spans residues 153–173 (LWRGFLDEAFVTGMLQLCLFA). The Cytoplasmic portion of the chain corresponds to 174-185 (ITDKKNSPALQG). A helical membrane pass occupies residues 186–202 (TEPLVIGILVTVLGVSL). The Extracellular segment spans residues 203–206 (GMNS). An intramembrane region (discontinuously helical) is located at residues 207-220 (GYAINPSRDLPPRL). Positions 211-213 (NPS) match the NPA 2 motif. The Extracellular portion of the chain corresponds to 221 to 238 (FTFIAGWGKQVFRAGNNW). Residues 239 to 260 (WWVPVVAPLLGAYLGGIVYLGL) traverse the membrane as a helical segment. The Cytoplasmic portion of the chain corresponds to 261-303 (IHPSIPQDPQRLENFTARDQKVTASYKNAASANISGSVPLEHF).

The protein belongs to the MIP/aquaporin (TC 1.A.8) family. Homotetramer; each monomer provides an independent glycerol/water pore. Two homotetramers on opposing membranes can dimerize, forming a cell-cell junction. Interacts with PLIN1. Phosphorylation by PKA could prevent the interaction with PLIN1. In terms of tissue distribution, detected in proximal tubules in kidney. Detected in the capillary network between muscle fibers in skeletal muscle and heart, and in spermatids and on spermatozoa tails in testis and epididymis. Detected in white and brown adipose tissue, especially on small blood vessels (at protein level). Detected in kidney and white adipose tissue.

Its subcellular location is the cell membrane. The protein localises to the cytoplasmic vesicle membrane. The protein resides in the lipid droplet. It catalyses the reaction glycerol(in) = glycerol(out). The catalysed reaction is H2O(in) = H2O(out). The enzyme catalyses urea(in) = urea(out). With respect to regulation, glycerol transport is regulated by pH, with the porin being permeable to glycerol at pH 7.4 but not at pH 5.5. Water permeability, however, is not influenced by pH. Functionally, aquaglyceroporins form homotetrameric transmembrane channels, with each monomer independently mediating glycerol and water transport across the plasma membrane along their osmotic gradient. Could also be permeable to urea. Mediates the efflux of glycerol, formed upon triglyceride hydrolysis, to avoid its accumulation in adipocytes and to make it available to other tissues. In the kidney, mediates the reabsorption of glycerol, preventing its loss in urine, again participating to energy homeostasis. In pancreatic beta cells, it also mediates the efflux of glycerol, regulating its intracellular levels. The chain is Aquaporin-7 from Mus musculus (Mouse).